A 283-amino-acid polypeptide reads, in one-letter code: Ribosomal RNA small subunit methyltransferase A (283 aa).

Residues Asn-22, Leu-24, Gly-49, Glu-70, and Asn-113 each coordinate S-adenosyl-L-methionine.

This sequence belongs to the class I-like SAM-binding methyltransferase superfamily. rRNA adenine N(6)-methyltransferase family. RsmA subfamily.

The protein localises to the cytoplasm. The catalysed reaction is adenosine(1518)/adenosine(1519) in 16S rRNA + 4 S-adenosyl-L-methionine = N(6)-dimethyladenosine(1518)/N(6)-dimethyladenosine(1519) in 16S rRNA + 4 S-adenosyl-L-homocysteine + 4 H(+). Functionally, specifically dimethylates two adjacent adenosines (A1518 and A1519) in the loop of a conserved hairpin near the 3'-end of 16S rRNA in the 30S particle. May play a critical role in biogenesis of 30S subunits. The sequence is that of Ribosomal RNA small subunit methyltransferase A from Myxococcus xanthus (strain DK1622).